Reading from the N-terminus, the 710-residue chain is Chaperonin-containing T-complex member BBS12 (710 aa).

The protein belongs to the TCP-1 chaperonin family. BBS12 subfamily. As to quaternary structure, component of the chaperonin-containing T-complex (TRiC), a heterooligomeric complex of about 850 to 900 kDa that forms two stacked rings, 12 to 16 nm in diameter. Interacts with MKKS.

It localises to the cell projection. It is found in the cilium. Component of the chaperonin-containing T-complex (TRiC), a molecular chaperone complex that assists the folding of proteins upon ATP hydrolysis. As part of the TRiC complex may play a role in the assembly of BBSome, a complex involved in ciliogenesis regulating transports vesicles to the cilia. Involved in adipogenic differentiation. This is Chaperonin-containing T-complex member BBS12 (BBS12) from Homo sapiens (Human).